Consider the following 62-residue polypeptide: Ferredoxin-1 (62 aa).

4Fe-4S ferredoxin-type domains are found at residues 2–28 and 29–62; these read ALYI…SAGS and EIYV…IVQG. [4Fe-4S] cluster is bound by residues C9, C12, C15, C19, C38, C41, C50, and C54.

The cofactor is [4Fe-4S] cluster.

Ferredoxins are iron-sulfur proteins that transfer electrons in a wide variety of metabolic reactions. This is Ferredoxin-1 from Chlorobaculum tepidum (strain ATCC 49652 / DSM 12025 / NBRC 103806 / TLS) (Chlorobium tepidum).